We begin with the raw amino-acid sequence, 161 residues long: Cyclic pyranopterin monophosphate synthase (161 aa).

Substrate is bound by residues 75 to 77 (LCH) and 113 to 114 (ME). The active site involves Asp128.

It belongs to the MoaC family. In terms of assembly, homohexamer; trimer of dimers.

The catalysed reaction is (8S)-3',8-cyclo-7,8-dihydroguanosine 5'-triphosphate = cyclic pyranopterin phosphate + diphosphate. Its pathway is cofactor biosynthesis; molybdopterin biosynthesis. In terms of biological role, catalyzes the conversion of (8S)-3',8-cyclo-7,8-dihydroguanosine 5'-triphosphate to cyclic pyranopterin monophosphate (cPMP). The sequence is that of Cyclic pyranopterin monophosphate synthase from Shigella sonnei (strain Ss046).